The chain runs to 93 residues: Small ribosomal subunit protein uS19 (93 aa).

Belongs to the universal ribosomal protein uS19 family.

In terms of biological role, protein S19 forms a complex with S13 that binds strongly to the 16S ribosomal RNA. The protein is Small ribosomal subunit protein uS19 of Blochmanniella floridana.